Here is a 225-residue protein sequence, read N- to C-terminus: Ras-related protein Rab-32 (225 aa).

A2 is subject to N-acetylalanine. Residues V36, G37, K38, T39, S40, S51, Q52, Y54, and T57 each coordinate GTP. Mg(2+) is bound at residue T39. The Switch 1 motif lies at 48-62; that stretch reads QLFSQHYRATIGVDF. T57 contacts Mg(2+). S71 carries the post-translational modification Phosphoserine. D81 provides a ligand contact to Mg(2+). GTP contacts are provided by G84, N143, K144, D146, A175, and K176. The short motif at 84–97 is the Switch 2 element; the sequence is GQERFGNMTRVYYK. The interval 178 to 197 is PKA-RII subunit binding domain; the sequence is NINIEEAARFLVEKILVNHQ. 2 S-geranylgeranyl cysteine lipidation sites follow: C224 and C225.

Belongs to the small GTPase superfamily. Rab family. As to quaternary structure, interacts with ANKRD27. A decreased interaction with ANKRD27 seen in the presence of SGSM2. Interacts with LRRK2 (via N-terminus); this interaction results in stimulation of RAB10 phosphorylation by LRRK2. Requires Mg(2+) as cofactor. In terms of tissue distribution, widely expressed with high levels in heart, liver, kidney, bone marrow, testis, colon and fetal lung.

Its subcellular location is the mitochondrion. It is found in the mitochondrion outer membrane. It localises to the cytoplasmic vesicle. The protein resides in the phagosome. The protein localises to the phagosome membrane. Its subcellular location is the melanosome. It is found in the melanosome membrane. The catalysed reaction is GTP + H2O = GDP + phosphate + H(+). With respect to regulation, regulated by guanine the nucleotide exchange factor (GEF) BLOC-3 complex composed of HPS1 and HPS4 which promote the exchange of bound GDP for free GTP. Regulated by the GTPase activating protein (GAP) SGSM2/RUTBC1 which increases the GTP hydrolysis activity. Inhibited by GDP dissociation inhibitors (GDIs) which prevent Rab-GDP dissociation. The small GTPases Rab are key regulators of intracellular membrane trafficking, from the formation of transport vesicles to their fusion with membranes. Rabs cycle between an inactive GDP-bound form and an active GTP-bound form that is able to recruit to membranes different set of downstream effectors directly responsible for vesicle formation, movement, tethering and fusion. Also acts as an A-kinase anchoring protein by binding to the type II regulatory subunit of protein kinase A and anchoring it to the mitochondrion. Also involved in synchronization of mitochondrial fission. Plays a role in the maturation of phagosomes that engulf pathogens, such as S.aureus and M.tuberculosis. Plays an important role in the control of melanin production and melanosome biogenesis. In concert with RAB38, regulates the proper trafficking of melanogenic enzymes TYR, TYRP1 and DCT/TYRP2 to melanosomes in melanocytes. Stimulates phosphorylation of RAB10 'Thr-73' by LRRK2. In Homo sapiens (Human), this protein is Ras-related protein Rab-32.